We begin with the raw amino-acid sequence, 587 residues long: Aspartate--tRNA ligase (587 aa).

Position 174 (glutamate 174) interacts with L-aspartate. Residues 198–201 (QITK) form an aspartate region. L-aspartate is bound at residue arginine 220. Residues 220 to 222 (RDE) and glutamine 229 each bind ATP. Histidine 443 lines the L-aspartate pocket. Glutamate 477 is a binding site for ATP. Arginine 484 is an L-aspartate binding site. An ATP-binding site is contributed by 529–532 (GLDR).

Belongs to the class-II aminoacyl-tRNA synthetase family. Type 1 subfamily. Homodimer.

It localises to the cytoplasm. The enzyme catalyses tRNA(Asp) + L-aspartate + ATP = L-aspartyl-tRNA(Asp) + AMP + diphosphate. Catalyzes the attachment of L-aspartate to tRNA(Asp) in a two-step reaction: L-aspartate is first activated by ATP to form Asp-AMP and then transferred to the acceptor end of tRNA(Asp). In Streptococcus pneumoniae serotype 4 (strain ATCC BAA-334 / TIGR4), this protein is Aspartate--tRNA ligase.